A 1096-amino-acid polypeptide reads, in one-letter code: Eukaryotic translation initiation factor 3 subunit A (1096 aa).

One can recognise a PCI domain in the interval 323 to 502; that stretch reads QATRVLLATL…GSIHFGAADA (180 aa). 3 coiled-coil regions span residues 591–643, 677–761, and 811–839; these read SERQ…IDRK, SVLR…RMQK, and KEGA…ERRA. Residues 808 to 852 are compositionally biased toward basic and acidic residues; the sequence is ELPKEGAEERMASAREVAEQTRRDEQEKERRAVRESQRPSKREIV. The tract at residues 808–1096 is disordered; it reads ELPKEGAEER…ADDDRNWRQK (289 aa). The segment covering 865–875 has biased composition (polar residues); it reads AQPTQPRTISS. Basic and acidic residues-rich tracts occupy residues 878–890, 933–942, and 955–973; these read FGER…RYRE, SNREQARGEA, and QRDR…KRGE. A compositionally biased stretch (polar residues) spans 1008–1023; the sequence is DSSQRTSAATPTTQPW. Residues 1085–1096 are compositionally biased toward basic and acidic residues; it reads GAADDDRNWRQK.

The protein belongs to the eIF-3 subunit A family. Component of the eukaryotic translation initiation factor 3 (eIF-3) complex.

It localises to the cytoplasm. Its function is as follows. RNA-binding component of the eukaryotic translation initiation factor 3 (eIF-3) complex, which is involved in protein synthesis of a specialized repertoire of mRNAs and, together with other initiation factors, stimulates binding of mRNA and methionyl-tRNAi to the 40S ribosome. The eIF-3 complex specifically targets and initiates translation of a subset of mRNAs involved in cell proliferation. This Brugia malayi (Filarial nematode worm) protein is Eukaryotic translation initiation factor 3 subunit A.